Reading from the N-terminus, the 78-residue chain is Putative permease-like protein YdzE (78 aa).

Transmembrane regions (helical) follow at residues 2-22 (YLGI…LQLL), 27-47 (GGLF…ILLG), and 49-69 (QIGG…LLVI). In terms of domain architecture, EamA spans 2–70 (YLGIVSTACA…ILSGVLLVIK (69 aa)).

It belongs to the EamA transporter family.

It is found in the cell membrane. The polypeptide is Putative permease-like protein YdzE (ydzE) (Bacillus subtilis (strain 168)).